The sequence spans 227 residues: 2,3-bisphosphoglycerate-dependent phosphoglycerate mutase (227 aa).

Residues Arg-7 to Asn-14, Thr-20 to Gly-21, Arg-59, Glu-86 to Tyr-89, Lys-97, Arg-113 to Arg-114, and Gly-182 to Asn-183 each bind substrate. The active-site Tele-phosphohistidine intermediate is the His-8. The active-site Proton donor/acceptor is the Glu-86.

It belongs to the phosphoglycerate mutase family. BPG-dependent PGAM subfamily. In terms of assembly, homodimer.

It catalyses the reaction (2R)-2-phosphoglycerate = (2R)-3-phosphoglycerate. The protein operates within carbohydrate degradation; glycolysis; pyruvate from D-glyceraldehyde 3-phosphate: step 3/5. Catalyzes the interconversion of 2-phosphoglycerate and 3-phosphoglycerate. The protein is 2,3-bisphosphoglycerate-dependent phosphoglycerate mutase of Pasteurella multocida (strain Pm70).